The following is a 201-amino-acid chain: Lipopolysaccharide core heptose(II)-phosphate phosphatase (201 aa).

An N-terminal signal peptide occupies residues 1–35; that stretch reads MLAFILRFIKNKSYFALLAGAWVIIAGLTSQHAWS.

The protein belongs to the phosphoglycerate mutase family. Ais subfamily.

It is found in the periplasm. It participates in bacterial outer membrane biogenesis; lipopolysaccharide metabolism. Functionally, catalyzes the dephosphorylation of heptose(II) of the outer membrane lipopolysaccharide core. In Salmonella arizonae (strain ATCC BAA-731 / CDC346-86 / RSK2980), this protein is Lipopolysaccharide core heptose(II)-phosphate phosphatase.